The primary structure comprises 511 residues: Sodium/proline symporter (511 aa).

The next 13 membrane-spanning stretches (helical) occupy residues W16–Y36, I53–M73, L84–V104, I138–S158, F173–A193, F199–N219, L239–F259, I285–F305, V326–S346, F380–W400, L409–L429, A437–I457, and I466–V486.

It belongs to the sodium:solute symporter (SSF) (TC 2.A.21) family.

The protein resides in the cell membrane. The catalysed reaction is L-proline(in) + Na(+)(in) = L-proline(out) + Na(+)(out). Catalyzes the sodium-dependent uptake of extracellular L-proline. Since most S.aureus strains are L-proline auxotrophs, this transporter may aid the bacterial persistence during an infection of tissues with low proline concentrations. The polypeptide is Sodium/proline symporter (Staphylococcus aureus).